A 236-amino-acid chain; its full sequence is EEF1A lysine methyltransferase 2 (236 aa).

Residues 1–11 (MSSGADGGGGA) show a composition bias toward gly residues. Residues 1 to 31 (MSSGADGGGGAAVAARSDKGSPGEDGFVPSA) are disordered. N-acetylserine is present on serine 2. A Phosphoserine modification is found at serine 21.

It belongs to the class I-like SAM-binding methyltransferase superfamily. EFM4 family.

Its subcellular location is the cytoplasm. The protein resides in the nucleus. The enzyme catalyses L-lysyl-[protein] + 3 S-adenosyl-L-methionine = N(6),N(6),N(6)-trimethyl-L-lysyl-[protein] + 3 S-adenosyl-L-homocysteine + 3 H(+). Its function is as follows. Protein-lysine methyltransferase that selectively catalyzes the trimethylation of EEF1A at 'Lys-318'. The sequence is that of EEF1A lysine methyltransferase 2 from Homo sapiens (Human).